The sequence spans 61 residues: Metallothionein-2E (61 aa).

Met-1 bears the N-acetylmethionine mark. A beta region spans residues 1-29; the sequence is MDPNCSCATRDSCACASSCKCKECKCTSC. Positions 5, 7, 13, 15, 19, 21, 24, 26, 29, 33, 34, 36, 37, 41, 44, 48, 50, 57, 59, and 60 each coordinate a divalent metal cation. The segment at 30 to 61 is alpha; it reads KKSCCSCCPAGCTKCAQGCICKGALDKCSCCA.

The protein belongs to the metallothionein superfamily. Type 1 family. In terms of assembly, monomer.

Functionally, metallothioneins have a high content of cysteine residues that bind various heavy metals; these proteins are transcriptionally regulated by both heavy metals and glucocorticoids. This Oryctolagus cuniculus (Rabbit) protein is Metallothionein-2E.